The chain runs to 869 residues: Alanine--tRNA ligase (869 aa).

Zn(2+)-binding residues include His559, His563, Cys660, and His664.

This sequence belongs to the class-II aminoacyl-tRNA synthetase family. It depends on Zn(2+) as a cofactor.

It localises to the cytoplasm. The enzyme catalyses tRNA(Ala) + L-alanine + ATP = L-alanyl-tRNA(Ala) + AMP + diphosphate. In terms of biological role, catalyzes the attachment of alanine to tRNA(Ala) in a two-step reaction: alanine is first activated by ATP to form Ala-AMP and then transferred to the acceptor end of tRNA(Ala). Also edits incorrectly charged Ser-tRNA(Ala) and Gly-tRNA(Ala) via its editing domain. This Janthinobacterium sp. (strain Marseille) (Minibacterium massiliensis) protein is Alanine--tRNA ligase.